Reading from the N-terminus, the 187-residue chain is Peptidyl-tRNA hydrolase (187 aa).

Position 18 (Tyr18) interacts with tRNA. The Proton acceptor role is filled by His23. Residues Phe65, Asn67, and Asn113 each contribute to the tRNA site.

This sequence belongs to the PTH family. In terms of assembly, monomer.

It is found in the cytoplasm. It carries out the reaction an N-acyl-L-alpha-aminoacyl-tRNA + H2O = an N-acyl-L-amino acid + a tRNA + H(+). Functionally, hydrolyzes ribosome-free peptidyl-tRNAs (with 1 or more amino acids incorporated), which drop off the ribosome during protein synthesis, or as a result of ribosome stalling. Catalyzes the release of premature peptidyl moieties from peptidyl-tRNA molecules trapped in stalled 50S ribosomal subunits, and thus maintains levels of free tRNAs and 50S ribosomes. This chain is Peptidyl-tRNA hydrolase, found in Coxiella burnetii (strain CbuG_Q212) (Coxiella burnetii (strain Q212)).